The chain runs to 218 residues: UPF0301 protein RPB_4502 (218 aa).

Residues 1 to 26 (MVTKSKRPKSGDRSGREPGNAGPIEQ) form a disordered region.

This sequence belongs to the UPF0301 (AlgH) family.

This Rhodopseudomonas palustris (strain HaA2) protein is UPF0301 protein RPB_4502.